Here is a 145-residue protein sequence, read N- to C-terminus: D-aminoacyl-tRNA deacylase (145 aa).

The Gly-cisPro motif, important for rejection of L-amino acids signature appears at 137–138; sequence GP.

The protein belongs to the DTD family. In terms of assembly, homodimer.

It localises to the cytoplasm. It catalyses the reaction glycyl-tRNA(Ala) + H2O = tRNA(Ala) + glycine + H(+). It carries out the reaction a D-aminoacyl-tRNA + H2O = a tRNA + a D-alpha-amino acid + H(+). Functionally, an aminoacyl-tRNA editing enzyme that deacylates mischarged D-aminoacyl-tRNAs. Also deacylates mischarged glycyl-tRNA(Ala), protecting cells against glycine mischarging by AlaRS. Acts via tRNA-based rather than protein-based catalysis; rejects L-amino acids rather than detecting D-amino acids in the active site. By recycling D-aminoacyl-tRNA to D-amino acids and free tRNA molecules, this enzyme counteracts the toxicity associated with the formation of D-aminoacyl-tRNA entities in vivo and helps enforce protein L-homochirality. The chain is D-aminoacyl-tRNA deacylase from Pseudomonas entomophila (strain L48).